We begin with the raw amino-acid sequence, 292 residues long: Ribosomal protein L11 methyltransferase (292 aa).

Positions 143, 164, 186, and 228 each coordinate S-adenosyl-L-methionine.

This sequence belongs to the methyltransferase superfamily. PrmA family.

Its subcellular location is the cytoplasm. The catalysed reaction is L-lysyl-[protein] + 3 S-adenosyl-L-methionine = N(6),N(6),N(6)-trimethyl-L-lysyl-[protein] + 3 S-adenosyl-L-homocysteine + 3 H(+). In terms of biological role, methylates ribosomal protein L11. The chain is Ribosomal protein L11 methyltransferase from Tolumonas auensis (strain DSM 9187 / NBRC 110442 / TA 4).